Here is a 305-residue protein sequence, read N- to C-terminus: 2-aminophenol 1,6-dioxygenase beta subunit (305 aa).

3 residues coordinate Fe cation: H14, H63, and H196.

Belongs to the LigB/MhpB extradiol dioxygenase family. As to quaternary structure, heterotetramer of 2 alpha and 2 beta subunits. The cofactor is Fe(2+).

It carries out the reaction 2-aminophenol + O2 = 2-aminomuconate 6-semialdehyde. Strongly inhibited by CuSO(4), FeCl(3), K(3)[Fe(CN)(6)], AgNO3, HgCl(2) and MnCl(2). Component of the 2-aminophenol 1,6-dioxygenase complex that catalyzes the ring fission of 2-aminophenol to produce 2-aminomuconic 6-semialdehyde. AmnB seems to be the catalytic subunit of the complex. The enzyme is also active toward 2-amino-p-cresol, 6-amino-m-cresol, 2-amino-m-cresol, 2-amino-4,5-dimethylphenol, 2-amino-4-chlorophenol, and catechol. The sequence is that of 2-aminophenol 1,6-dioxygenase beta subunit (amnB) from Pseudomonas sp.